The sequence spans 170 residues: Photosystem I assembly protein Ycf3 (170 aa).

3 TPR repeats span residues 35 to 68 (AFCYYRDGMSAQSEGEYAEALENYYEALRLEEDP), 72 to 105 (SYIIYNIGLIYASNGEHIKALEYYHQSLELNPRL), and 120 to 153 (GLKAADKQDNNMSKSMFDKAAEYWKQAIYLAPNN).

Belongs to the Ycf3 family.

The protein localises to the plastid. It localises to the chloroplast thylakoid membrane. In terms of biological role, essential for the assembly of the photosystem I (PSI) complex. May act as a chaperone-like factor to guide the assembly of the PSI subunits. The sequence is that of Photosystem I assembly protein Ycf3 from Gracilaria tenuistipitata var. liui (Red alga).